The chain runs to 215 residues: Pyrrolidone-carboxylate peptidase (215 aa).

Catalysis depends on residues glutamate 78, cysteine 141, and histidine 165.

Belongs to the peptidase C15 family. As to quaternary structure, homotetramer.

Its subcellular location is the cytoplasm. It carries out the reaction Release of an N-terminal pyroglutamyl group from a polypeptide, the second amino acid generally not being Pro.. Removes 5-oxoproline from various penultimate amino acid residues except L-proline. The chain is Pyrrolidone-carboxylate peptidase from Streptococcus pyogenes serotype M3 (strain SSI-1).